Reading from the N-terminus, the 737-residue chain is ATP-dependent RNA helicase SUV3, mitochondrial (737 aa).

The N-terminal 25 residues, 1 to 25, are a transit peptide targeting the mitochondrion; the sequence is MTLVKYSTIAFPLRSFRLFIFVKKA. Residues 226 to 365 enclose the Helicase ATP-binding domain; the sequence is EARKIRRHII…KSVLPLVKSI (140 aa). 239 to 246 is a binding site for ATP; the sequence is GPTNSGKT. In terms of domain architecture, Helicase C-terminal spans 390–546; that stretch reads PVKDGIKGLR…YLKTAVTWPT (157 aa).

Belongs to the helicase family.

Its subcellular location is the mitochondrion. It catalyses the reaction ATP + H2O = ADP + phosphate + H(+). In terms of biological role, probable ATP-dependent RNA helicase involved in a variety of mitochondrial post-transcriptional processes and in translation. It is a key control element in nuclear-mitochondrial interactions. This Saccharomyces paradoxus (Yeast) protein is ATP-dependent RNA helicase SUV3, mitochondrial (SUV3).